A 174-amino-acid polypeptide reads, in one-letter code: Crossover junction endodeoxyribonuclease RuvC (174 aa).

Residues aspartate 8, glutamate 67, and aspartate 139 contribute to the active site. The Mg(2+) site is built by aspartate 8, glutamate 67, and aspartate 139.

The protein belongs to the RuvC family. As to quaternary structure, homodimer which binds Holliday junction (HJ) DNA. The HJ becomes 2-fold symmetrical on binding to RuvC with unstacked arms; it has a different conformation from HJ DNA in complex with RuvA. In the full resolvosome a probable DNA-RuvA(4)-RuvB(12)-RuvC(2) complex forms which resolves the HJ. Mg(2+) serves as cofactor.

The protein resides in the cytoplasm. The catalysed reaction is Endonucleolytic cleavage at a junction such as a reciprocal single-stranded crossover between two homologous DNA duplexes (Holliday junction).. Functionally, the RuvA-RuvB-RuvC complex processes Holliday junction (HJ) DNA during genetic recombination and DNA repair. Endonuclease that resolves HJ intermediates. Cleaves cruciform DNA by making single-stranded nicks across the HJ at symmetrical positions within the homologous arms, yielding a 5'-phosphate and a 3'-hydroxyl group; requires a central core of homology in the junction. The consensus cleavage sequence is 5'-(A/T)TT(C/G)-3'. Cleavage occurs on the 3'-side of the TT dinucleotide at the point of strand exchange. HJ branch migration catalyzed by RuvA-RuvB allows RuvC to scan DNA until it finds its consensus sequence, where it cleaves and resolves the cruciform DNA. The polypeptide is Crossover junction endodeoxyribonuclease RuvC (Pseudomonas aeruginosa (strain LESB58)).